An 879-amino-acid polypeptide reads, in one-letter code: Valine--tRNA ligase (879 aa).

The 'HIGH' region motif lies at 45 to 55; it reads PNVTGKLHLGH. Positions 521-525 match the 'KMSKS' region motif; sequence KMSKS. Residue Lys524 coordinates ATP. The stretch at 806–879 forms a coiled coil; it reads LTELVNVDEE…ERMKELKESK (74 aa).

The protein belongs to the class-I aminoacyl-tRNA synthetase family. ValS type 1 subfamily. Monomer.

Its subcellular location is the cytoplasm. The catalysed reaction is tRNA(Val) + L-valine + ATP = L-valyl-tRNA(Val) + AMP + diphosphate. Functionally, catalyzes the attachment of valine to tRNA(Val). As ValRS can inadvertently accommodate and process structurally similar amino acids such as threonine, to avoid such errors, it has a 'posttransfer' editing activity that hydrolyzes mischarged Thr-tRNA(Val) in a tRNA-dependent manner. This is Valine--tRNA ligase from Lactobacillus johnsonii (strain CNCM I-12250 / La1 / NCC 533).